The primary structure comprises 72 residues: UPF0729 protein C18orf32 homolog (72 aa).

Residues 1–33 (MVCIPCIVIPVLLWIFKKFLEPYIYPVVSRIWP) are necessary for its localzation to the endoplasmic reticulum and lipid droplets. The tract at residues 45-72 (TGKVDCKGADTNGFSTKGPTEVSDKKKD) is disordered.

The protein belongs to the UPF0729 family. As to quaternary structure, interacts with DERL1 and AMFR. Post-translationally, undergoes ER-associated degradation (ERAD).

It localises to the endoplasmic reticulum. The protein localises to the lipid droplet. Functionally, may activate the NF-kappa-B signaling pathway. This Rattus norvegicus (Rat) protein is UPF0729 protein C18orf32 homolog.